The following is a 232-amino-acid chain: Ion-translocating oxidoreductase complex subunit E (232 aa).

The next 6 helical transmembrane spans lie at 18–38 (GLVQLLGLCPLLAVTATITNA), 39–59 (LGLGLATMLVLIGSNILVSLV), 69–89 (IPVFVMIIAALVTTVQLLINA), 93–113 (GLYLSLGIFLPLIVTNCIIIG), 127–147 (AAFDGLMMGLGFTLVLTVLGA), and 182–202 (PFLLAMLPPGAFIVMGLLIAL).

Belongs to the NqrDE/RnfAE family. As to quaternary structure, the complex is composed of six subunits: RnfA, RnfB, RnfC, RnfD, RnfE and RnfG.

It is found in the cell inner membrane. Its function is as follows. Part of a membrane-bound complex that couples electron transfer with translocation of ions across the membrane. The protein is Ion-translocating oxidoreductase complex subunit E of Shewanella baltica (strain OS185).